The chain runs to 545 residues: MTTRYIFVTGGVVSSLGKGIAAASLAAILEARGLNVTIMKLDPYINLDPGTMSPTQHGEVFVTEDGAETDLDLGHYERFIRTKMNRRNNFTTGRIYSEVLRKERRGDYLGATIQVIPHITNAIKEKVLDGGEGHDVAIVEIGGTVGDIESLPFLESIRQLGVELGRERTLFMHLTLVPFLGAAGEVKTKPTQHSVKELRSIGIAPDVLVCRGDRAIPANEKAKISLFCNVEERAVISLKDVDSIYKIPALLKAQGLDELVTKRFGIECKEADLHEWEQVIYQEANPTGDVTIGMVGKYIELPDAYKSVNEALKHAGLFNRVSVNIKYIDSQTVEAKGEEVLEGLDGILVPGGFGERGVEGKIFAAKYARENNLPYFGICLGMQVALIEFARHVAGLEGAHSTEFQKETPHPVVGLITEWLNEDGNVEQRHETSDLGGTMRLGAQLCHLEEGTKAAAAYQANTCVERHRHRYEVNNNYKDRLEKAGLVFSGLSSDRQLVEMIELPNHPWFVAGQFHPEFTSTPRDGQPLFVGFVAAAAAHQKRDLG.

The tract at residues 1 to 266 (MTTRYIFVTG…DELVTKRFGI (266 aa)) is amidoligase domain. Position 14 (serine 14) interacts with CTP. Serine 14 contacts UTP. ATP contacts are provided by residues 15–20 (SLGKGI) and aspartate 72. Aspartate 72 and glutamate 140 together coordinate Mg(2+). CTP is bound by residues 147 to 149 (DIE), 187 to 192 (KTKPTQ), and lysine 223. UTP is bound by residues 187–192 (KTKPTQ) and lysine 223. 239-241 (KDV) serves as a coordination point for ATP. The region spanning 291–542 (TIGMVGKYIE…VAAAAAHQKR (252 aa)) is the Glutamine amidotransferase type-1 domain. An L-glutamine-binding site is contributed by glycine 352. Cysteine 379 (nucleophile; for glutamine hydrolysis) is an active-site residue. L-glutamine-binding positions include 380–383 (LGMQ), glutamate 403, and arginine 470. Active-site residues include histidine 515 and glutamate 517.

The protein belongs to the CTP synthase family. As to quaternary structure, homotetramer.

The enzyme catalyses UTP + L-glutamine + ATP + H2O = CTP + L-glutamate + ADP + phosphate + 2 H(+). The catalysed reaction is L-glutamine + H2O = L-glutamate + NH4(+). It catalyses the reaction UTP + NH4(+) + ATP = CTP + ADP + phosphate + 2 H(+). Its pathway is pyrimidine metabolism; CTP biosynthesis via de novo pathway; CTP from UDP: step 2/2. Allosterically activated by GTP, when glutamine is the substrate; GTP has no effect on the reaction when ammonia is the substrate. The allosteric effector GTP functions by stabilizing the protein conformation that binds the tetrahedral intermediate(s) formed during glutamine hydrolysis. Inhibited by the product CTP, via allosteric rather than competitive inhibition. Catalyzes the ATP-dependent amination of UTP to CTP with either L-glutamine or ammonia as the source of nitrogen. Regulates intracellular CTP levels through interactions with the four ribonucleotide triphosphates. The protein is CTP synthase of Shewanella woodyi (strain ATCC 51908 / MS32).